Consider the following 72-residue polypeptide: UPF0150 protein jhp_0960 (72 aa).

Belongs to the UPF0150 family.

This is UPF0150 protein jhp_0960 from Helicobacter pylori (strain J99 / ATCC 700824) (Campylobacter pylori J99).